A 77-amino-acid polypeptide reads, in one-letter code: Small ribosomal subunit protein uS17 (77 aa).

Belongs to the universal ribosomal protein uS17 family. Part of the 30S ribosomal subunit.

Its function is as follows. One of the primary rRNA binding proteins, it binds specifically to the 5'-end of 16S ribosomal RNA. The sequence is that of Small ribosomal subunit protein uS17 from Wolbachia sp. subsp. Brugia malayi (strain TRS).